The sequence spans 324 residues: MAATAAAANGTGGSSGMEVDAAVVPSVMASGVTGSVSVALHPLVILNISDHWIRMRSQEGRPMQVIGALIGKQEGRNIEVMNSFELLSHTVEEKIIIDKEYYYTKEEQFKQVFKELDFLGWYTTGGPPDPSDIHVHKQVCEIIESPLFLKLNPMTKHTDLPVSVFESVIDIINGEATMLFAELTYTLATEEAERIGVDHVARMTATGSGENSTVAEHLIAQHSAIKMLHSRVKLILEYVKASEAGEVPFNHEILREAYALCHCLPVLSTDKFKTDFYDQCNDVGLMAYLGTITKTCNTMNQFVNKFNVLYDRQGIGRRMRGLFF.

Positions 38 to 171 (VALHPLVILN…VSVFESVIDI (134 aa)) constitute an MPN domain.

It belongs to the peptidase M67A family. CSN6 subfamily. Component of the CSN complex, composed of COPS1/GPS1, COPS2, COPS3, COPS4, COPS5, COPS6, COPS7 (COPS7A or COPS7B), COPS8 and COPS9. In the complex, it probably interacts directly with COPS2, COPS4, COPS5, COPS7 (COPS7A or COPS7B) and COPS9. Interacts with the translation initiation factor EIF3S6. Interacts weakly with RBX1. Directly interacts with COP1 and 14-3-3 protein sigma/SFN. Interacts with ERCC6.

Its subcellular location is the cytoplasm. The protein resides in the nucleus. Functionally, component of the COP9 signalosome complex (CSN), a complex involved in various cellular and developmental processes. The CSN complex is an essential regulator of the ubiquitin (Ubl) conjugation pathway by mediating the deneddylation of the cullin subunits of SCF-type E3 ligase complexes, leading to decrease the Ubl ligase activity of SCF-type complexes such as SCF, CSA or DDB2. The complex is also involved in phosphorylation of p53/TP53, c-jun/JUN, IkappaBalpha/NFKBIA, ITPK1 and IRF8, possibly via its association with CK2 and PKD kinases. CSN-dependent phosphorylation of TP53 and JUN promotes and protects degradation by the Ubl system, respectively. Has some glucocorticoid receptor-responsive activity. Stabilizes COP1 through reducing COP1 auto-ubiquitination and decelerating COP1 turnover rate, hence regulates the ubiquitination of COP1 targets, including SFN. This Bos taurus (Bovine) protein is COP9 signalosome complex subunit 6 (COPS6).